A 270-amino-acid chain; its full sequence is ATP synthase subunit a (270 aa).

5 helical membrane-spanning segments follow: residues 37-57 (NVHIDSLFFSVFTGMLFLWVF), 98-118 (IAPLALTIFCWVILMNLMDLV), 143-163 (DVNITMAMALGVFALMIYYSI), 217-237 (VVFILIAAMLPWYLQWVGALP), and 239-259 (AIFHILVILIQAFVFMMLTIV).

Belongs to the ATPase A chain family. As to quaternary structure, F-type ATPases have 2 components, CF(1) - the catalytic core - and CF(0) - the membrane proton channel. CF(1) has five subunits: alpha(3), beta(3), gamma(1), delta(1), epsilon(1). CF(0) has three main subunits: a(1), b(2) and c(9-12). The alpha and beta chains form an alternating ring which encloses part of the gamma chain. CF(1) is attached to CF(0) by a central stalk formed by the gamma and epsilon chains, while a peripheral stalk is formed by the delta and b chains.

It localises to the cell inner membrane. Functionally, key component of the proton channel; it plays a direct role in the translocation of protons across the membrane. In Aliivibrio fischeri (strain ATCC 700601 / ES114) (Vibrio fischeri), this protein is ATP synthase subunit a.